Here is a 601-residue protein sequence, read N- to C-terminus: A-type ATP synthase subunit A (601 aa).

236–243 (GPFGSGKT) provides a ligand contact to ATP.

Belongs to the ATPase alpha/beta chains family. Has multiple subunits with at least A(3), B(3), C, D, E, F, H, I and proteolipid K(x).

The protein localises to the cell membrane. The catalysed reaction is ATP + H2O + 4 H(+)(in) = ADP + phosphate + 5 H(+)(out). Component of the A-type ATP synthase that produces ATP from ADP in the presence of a proton gradient across the membrane. The A chain is the catalytic subunit. The polypeptide is A-type ATP synthase subunit A (Hyperthermus butylicus (strain DSM 5456 / JCM 9403 / PLM1-5)).